The primary structure comprises 209 residues: Protein phosphotransferase ChpT (209 aa).

At His22 the chain carries Phosphohistidine.

It belongs to the ChpT phosphotransferase family. In terms of assembly, homodimer. Forms an asymmetric heterotetramer with CtrA (2:2). There are at least two modes of interaction between ChpT and CtrA, only one of which is competent to catalyze His-Asp phosphoryl transfer. In terms of processing, is phosphorylated by CckA-P on His-22.

The protein localises to the cytoplasm. Component of a regulatory phosphorelay system that controls B.abortus cell growth, division, and intracellular survival inside mammalian host cells. This signaling pathway is composed of CckA, ChpT, CtrA and CpdR. ChpT efficiently and specifically shuttles phosphoryl groups from the CckA kinase to the receiver domains of both CtrA and CpdR. Does not bind ATP. Overexpression of chpT results in a defect in cell morphology, DNA content, and intracellular survival in human macrophages. This Brucella abortus (strain 2308) protein is Protein phosphotransferase ChpT.